A 476-amino-acid polypeptide reads, in one-letter code: Serine/threonine-protein kinase Chk1 (476 aa).

The interval 1–265 (MAVPFVEDWD…IPDIKKDRWY (265 aa)) is interaction with CLSPN. Residues 9–265 (WDLVQTLGEG…IPDIKKDRWY (257 aa)) enclose the Protein kinase domain. ATP is bound by residues 15–23 (LGEGAYGEV) and Lys-38. The active-site Proton acceptor is the Asp-130. Residue Lys-132 forms a Glycyl lysine isopeptide (Lys-Gly) (interchain with G-Cter in ubiquitin) linkage. Residues 267–331 (KPLNRGAKRP…RTGLSLWDTG (65 aa)) form a disordered region. Ser-280 bears the Phosphoserine; by PKB/AKT1 mark. Low complexity predominate over residues 280–291 (SGGMSESSSGFS). Ser-286, Ser-296, and Ser-301 each carry phosphoserine. Positions 298–320 (LDFSPVNNGSSEETVKFSSSQPE) are enriched in polar residues. At Ser-317 the chain carries Phosphoserine; by ATM and ATR. A Phosphoserine; by ATR modification is found at Ser-345. Positions 391–476 (QCLKETFEKL…SSQKVWFPVT (86 aa)) are autoinhibitory region. Lys-436 is covalently cross-linked (Glycyl lysine isopeptide (Lys-Gly) (interchain with G-Cter in ubiquitin)). Ser-463, Ser-467, and Ser-468 each carry phosphoserine.

The protein belongs to the protein kinase superfamily. CAMK Ser/Thr protein kinase family. NIM1 subfamily. Interacts (phosphorylated by ATR) with RAD51. Interacts with and phosphorylates CLSPN, an adapter protein that regulates the ATR-dependent phosphorylation of CHEK1. Interacts with BRCA1. Interacts with and phosphorylates CDC25A, CDC25B and CDC25C. Interacts with FBXO6, which regulates CHEK1. Interacts with PPM1D, which regulates CHEK1 through dephosphorylation. Interacts with TIMELESS; DNA damage-dependent. Interacts with FEM1B; activates CHEK1 in response to stress. Interacts with TLK1. Interacts with XPO1 and YWHAZ. Interacts with CDK5RAP3; antagonizes CHEK1. Phosphorylated by ATR in a RAD17-dependent manner in response to ultraviolet irradiation and inhibition of DNA replication. Phosphorylated by ATM in response to ionizing irradiation. ATM and ATR can both phosphorylate Ser-317 and Ser-345 and this results in enhanced kinase activity. Phosphorylation at Ser-345 induces a change in the conformation of the protein, activates the kinase activity and is a prerequisite for interaction with FBXO6 and subsequent ubiquitination at Lys-436. Phosphorylation at Ser-345 also increases binding to 14-3-3 proteins and promotes nuclear retention. Conversely, dephosphorylation at Ser-345 by PPM1D may contribute to exit from checkpoint mediated cell cycle arrest. Phosphorylation at Ser-280 by AKT1/PKB, may promote mono and/or diubiquitination. Also phosphorylated at undefined residues during mitotic arrest, resulting in decreased activity. Post-translationally, ubiquitinated. Mono or diubiquitination promotes nuclear exclusion. The activated form (phosphorylated on Ser-345) is polyubiquitinated at Lys-436 by some SCF-type E3 ubiquitin ligase complex containing FBXO6 promoting its degradation. Ubiquitination and degradation are required to terminate the checkpoint and ensure that activated CHEK1 does not accumulate as cells progress through S phase, when replication forks encounter transient impediments during normal DNA replication. 'Lys-63'-mediated ubiquitination by TRAF4 at Lys-132 activates cell cycle arrest and activation of DNA repair. In terms of processing, proteolytically cleaved at the C-terminus by SPRTN during normal DNA replication, thereby promoting CHEK1 removal from chromatin and activating the protein kinase activity. As to expression, found in all adult tissues tested. Elevated expression in testis, lung and spleen. 15.5 day old embryos show ubiquitous expression with strong expression in brain, liver, kidney, pancreas, intestine, thymus and lung.

The protein localises to the nucleus. Its subcellular location is the chromosome. The protein resides in the cytoplasm. It is found in the cytoskeleton. It localises to the microtubule organizing center. The protein localises to the centrosome. The enzyme catalyses L-seryl-[protein] + ATP = O-phospho-L-seryl-[protein] + ADP + H(+). It catalyses the reaction L-threonyl-[protein] + ATP = O-phospho-L-threonyl-[protein] + ADP + H(+). With respect to regulation, activated through phosphorylation predominantly by ATR but also by ATM in response to DNA damage or inhibition of DNA replication. Activation is modulated by several mediators including CLSPN, BRCA1 and FEM1B. Proteolytic cleavage at the C-terminus by SPRTN during normal DNA replication activates the protein kinase activity. In terms of biological role, serine/threonine-protein kinase which is required for checkpoint-mediated cell cycle arrest and activation of DNA repair in response to the presence of DNA damage or unreplicated DNA. May also negatively regulate cell cycle progression during unperturbed cell cycles. This regulation is achieved by a number of mechanisms that together help to preserve the integrity of the genome. Recognizes the substrate consensus sequence [R-X-X-S/T]. Binds to and phosphorylates CDC25A, CDC25B and CDC25C. Phosphorylation of CDC25A at 'Ser-178' and 'Thr-507' and phosphorylation of CDC25C at 'Ser-216' creates binding sites for 14-3-3 proteins which inhibit CDC25A and CDC25C. Phosphorylation of CDC25A at 'Ser-76', 'Ser-124', 'Ser-178', 'Ser-279' and 'Ser-293' promotes proteolysis of CDC25A. Phosphorylation of CDC25A at 'Ser-76' primes the protein for subsequent phosphorylation at 'Ser-79', 'Ser-82' and 'Ser-88' by NEK11, which is required for polyubiquitination and degradation of CDCD25A. Inhibition of CDC25 leads to increased inhibitory tyrosine phosphorylation of CDK-cyclin complexes and blocks cell cycle progression. Also phosphorylates NEK6. Binds to and phosphorylates RAD51 at 'Thr-309', which promotes the release of RAD51 from BRCA2 and enhances the association of RAD51 with chromatin, thereby promoting DNA repair by homologous recombination. Phosphorylates multiple sites within the C-terminus of TP53, which promotes activation of TP53 by acetylation and promotes cell cycle arrest and suppression of cellular proliferation. Also promotes repair of DNA cross-links through phosphorylation of FANCE. Binds to and phosphorylates TLK1 at 'Ser-743', which prevents the TLK1-dependent phosphorylation of the chromatin assembly factor ASF1A. This may enhance chromatin assembly both in the presence or absence of DNA damage. May also play a role in replication fork maintenance through regulation of PCNA. May regulate the transcription of genes that regulate cell-cycle progression through the phosphorylation of histones. Phosphorylates histone H3.1 (to form H3T11ph), which leads to epigenetic inhibition of a subset of genes. May also phosphorylate RB1 to promote its interaction with the E2F family of transcription factors and subsequent cell cycle arrest. Phosphorylates SPRTN, promoting SPRTN recruitment to chromatin. Reduces replication stress and activates the G2/M checkpoint, by phosphorylating and inactivating PABIR1/FAM122A and promoting the serine/threonine-protein phosphatase 2A-mediated dephosphorylation and stabilization of WEE1 levels and activity. This Mus musculus (Mouse) protein is Serine/threonine-protein kinase Chk1 (Chek1).